We begin with the raw amino-acid sequence, 729 residues long: Sodium-dependent neutral amino acid transporter B(0)AT2 (729 aa).

The Cytoplasmic segment spans residues 1–69; the sequence is MPKNSKVVKR…ERPAWNSKLQ (69 aa). S25 and S55 each carry phosphoserine. The disordered stretch occupies residues 42 to 61; that stretch reads DVQEEKDTDAEDGSEADDER. Positions 43 to 59 are enriched in acidic residues; it reads VQEEKDTDAEDGSEADD. The next 3 membrane-spanning stretches (helical) occupy residues 70–90, 98–117, and 142–162; these read YILA…FPYL, AYLL…LFFL, and GIGF…NVII. Topologically, residues 163–225 are extracellular; it reads GWTLFYFSQS…SSISDSGGLN (63 aa). A glycan (N-linked (GlcNAc...) asparagine) is linked at N187. The next 2 helical transmembrane spans lie at 226 to 244 and 253 to 270; these read WKMT…LAMI and IMYF…CFLI. N-linked (GlcNAc...) asparagine glycosylation is present at N276. Transmembrane regions (helical) follow at residues 306 to 323 and 335 to 356; these read VFFA…FSSY and VLVS…FAVL. Over 357 to 452 the chain is Extracellular; sequence GFKANIVNEK…FIAFTEAMTH (96 aa). N-linked (GlcNAc...) asparagine glycosylation is found at N383 and N394. 5 consecutive transmembrane segments (helical) span residues 453–472, 496–514, 530–550, 571–592, and 620–642; these read FPAS…NLGL, ILTV…IFVQ, TLPL…VYGI, YMWK…IVNM, and VVCF…IRRC. Residues 643 to 729 are Cytoplasmic-facing; the sequence is NLIDDSSGNL…DMPDMPESDL (87 aa). Residues S687, S699, and S701 each carry the phosphoserine modification.

This sequence belongs to the sodium:neurotransmitter symporter (SNF) (TC 2.A.22) family. SLC6A15 subfamily. In terms of tissue distribution, significant expressed in brain, lung and kidney. In brain, mainly expressed int the cortex, the cerebellum and the brain stem.

Its subcellular location is the membrane. It carries out the reaction L-pipecolate(in) + Na(+)(in) = L-pipecolate(out) + Na(+)(out). The enzyme catalyses L-leucine(in) + Na(+)(in) = L-leucine(out) + Na(+)(out). The catalysed reaction is L-isoleucine(in) + Na(+)(in) = L-isoleucine(out) + Na(+)(out). It catalyses the reaction L-methionine(in) + Na(+)(in) = L-methionine(out) + Na(+)(out). It carries out the reaction L-proline(in) + Na(+)(in) = L-proline(out) + Na(+)(out). The enzyme catalyses L-alanine(in) + Na(+)(in) = L-alanine(out) + Na(+)(out). The catalysed reaction is L-asparagine(in) + Na(+)(in) = L-asparagine(out) + Na(+)(out). It catalyses the reaction L-valine(in) + Na(+)(in) = L-valine(out) + Na(+)(out). It carries out the reaction L-cysteine(in) + Na(+)(in) = L-cysteine(out) + Na(+)(out). The enzyme catalyses L-glutamine(in) + Na(+)(in) = L-glutamine(out) + Na(+)(out). The catalysed reaction is L-serine(in) + Na(+)(in) = L-serine(out) + Na(+)(out). It catalyses the reaction L-threonine(in) + Na(+)(in) = L-threonine(out) + Na(+)(out). It carries out the reaction L-phenylalanine(in) + Na(+)(in) = L-phenylalanine(out) + Na(+)(out). Functions as a sodium-dependent neutral amino acid transporter. Exhibits preference for methionine and for the branched-chain amino acids, particularly leucine, valine and isoleucine. Can also transport low-affinity substrates such as alanine, phenylalanine, glutamine and pipecolic acid. Mediates the saturable, pH-sensitive and electrogenic cotransport of proline and sodium ions with a stoichiometry of 1:1. May have a role as transporter for neurotransmitter precursors into neurons. In contrast to other members of the neurotransmitter transporter family, does not appear to be chloride-dependent. In Mus musculus (Mouse), this protein is Sodium-dependent neutral amino acid transporter B(0)AT2 (Slc6a15).